Consider the following 444-residue polypeptide: Killer cell immunoglobulin-like receptor 3DL1 (444 aa).

Positions 1 to 21 (MSLMVVSMACVGLFLVQRAGP) are cleaved as a signal peptide. Topologically, residues 22–340 (HMGGQDKPFL…SKSGNPRHLH (319 aa)) are extracellular. Ig-like C2-type domains are found at residues 42 to 102 (GGHV…HPHS), 137 to 202 (GERV…VTHT), and 237 to 300 (GESV…FRHS). Intrachain disulfides connect cysteine 49–cysteine 95, cysteine 144–cysteine 195, and cysteine 244–cysteine 293. N-linked (GlcNAc...) asparagine glycosylation is found at asparagine 92, asparagine 179, and asparagine 273. The disordered stretch occupies residues 315-334 (VTGNPSSSWPSPTEPSSKSG). Residues 319–333 (PSSSWPSPTEPSSKS) are compositionally biased toward low complexity. The chain crosses the membrane as a helical span at residues 341-360 (ILIGTSVVIILFILLLFFLL). Residues 361–444 (HLWCSNKKNA…KPRSKVVSCP (84 aa)) are Cytoplasmic-facing. Disordered regions lie at residues 375 to 394 (QEPA…QDPE) and 409 to 444 (RKIT…VSCP).

Belongs to the immunoglobulin superfamily.

Its subcellular location is the cell membrane. In terms of biological role, receptor on natural killer (NK) cells for HLA Bw4 allele. Inhibits the activity of NK cells thus preventing cell lysis. The chain is Killer cell immunoglobulin-like receptor 3DL1 from Homo sapiens (Human).